Reading from the N-terminus, the 142-residue chain is Ribosomal RNA large subunit methyltransferase H (142 aa).

G89 provides a ligand contact to S-adenosyl-L-methionine.

The protein belongs to the RNA methyltransferase RlmH family. In terms of assembly, homodimer.

Its subcellular location is the cytoplasm. It carries out the reaction pseudouridine(1915) in 23S rRNA + S-adenosyl-L-methionine = N(3)-methylpseudouridine(1915) in 23S rRNA + S-adenosyl-L-homocysteine + H(+). Specifically methylates the pseudouridine at position 1915 (m3Psi1915) in 23S rRNA. The protein is Ribosomal RNA large subunit methyltransferase H of Zymomonas mobilis subsp. mobilis (strain ATCC 31821 / ZM4 / CP4).